A 363-amino-acid chain; its full sequence is UDP-N-acetylglucosamine--N-acetylmuramyl-(pentapeptide) pyrophosphoryl-undecaprenol N-acetylglucosamine transferase (363 aa).

UDP-N-acetyl-alpha-D-glucosamine is bound by residues 21–23 (TGG), Asn-129, Arg-170, Ser-196, and Gln-290.

This sequence belongs to the glycosyltransferase 28 family. MurG subfamily.

Its subcellular location is the cell inner membrane. The catalysed reaction is di-trans,octa-cis-undecaprenyl diphospho-N-acetyl-alpha-D-muramoyl-L-alanyl-D-glutamyl-meso-2,6-diaminopimeloyl-D-alanyl-D-alanine + UDP-N-acetyl-alpha-D-glucosamine = di-trans,octa-cis-undecaprenyl diphospho-[N-acetyl-alpha-D-glucosaminyl-(1-&gt;4)]-N-acetyl-alpha-D-muramoyl-L-alanyl-D-glutamyl-meso-2,6-diaminopimeloyl-D-alanyl-D-alanine + UDP + H(+). Its pathway is cell wall biogenesis; peptidoglycan biosynthesis. In terms of biological role, cell wall formation. Catalyzes the transfer of a GlcNAc subunit on undecaprenyl-pyrophosphoryl-MurNAc-pentapeptide (lipid intermediate I) to form undecaprenyl-pyrophosphoryl-MurNAc-(pentapeptide)GlcNAc (lipid intermediate II). In Synechococcus sp. (strain ATCC 27144 / PCC 6301 / SAUG 1402/1) (Anacystis nidulans), this protein is UDP-N-acetylglucosamine--N-acetylmuramyl-(pentapeptide) pyrophosphoryl-undecaprenol N-acetylglucosamine transferase.